Here is a 387-residue protein sequence, read N- to C-terminus: N-acetyldiaminopimelate deacetylase (387 aa).

The active site involves Asp-75. The active-site Proton acceptor is the Glu-134.

The protein belongs to the peptidase M20A family. N-acetyldiaminopimelate deacetylase subfamily.

It carries out the reaction N-acetyl-(2S,6S)-2,6-diaminopimelate + H2O = (2S,6S)-2,6-diaminopimelate + acetate. The protein operates within amino-acid biosynthesis; L-lysine biosynthesis via DAP pathway; LL-2,6-diaminopimelate from (S)-tetrahydrodipicolinate (acetylase route): step 3/3. Functionally, catalyzes the conversion of N-acetyl-diaminopimelate to diaminopimelate and acetate. The chain is N-acetyldiaminopimelate deacetylase from Leuconostoc citreum (strain KM20).